A 1106-amino-acid chain; its full sequence is Translation initiation factor IF-2 (1106 aa).

2 stretches are compositionally biased toward low complexity: residues G57 to G72 and A81 to P97. 2 disordered regions span residues G57–H434 and P466–R497. 2 stretches are compositionally biased toward pro residues: residues P113 to S123 and P138 to S148. Residues A172–P199 show a composition bias toward low complexity. Pro residues-rich tracts occupy residues P200–K214 and T223–P235. Composition is skewed to low complexity over residues P251–R292, P319–R329, and Y395–G405. Residues R408–R422 show a composition bias toward basic and acidic residues. The segment covering A482 to R497 has biased composition (basic residues). Residues R598–K771 enclose the tr-type G domain. Positions G607 to T614 are G1. Position 607-614 (G607–T614) interacts with GTP. The tract at residues G632–H636 is G2. The tract at residues D657–G660 is G3. Residues D657–H661 and N711–D714 contribute to the GTP site. A G4 region spans residues N711–D714. Positions S747–L749 are G5.

The protein belongs to the TRAFAC class translation factor GTPase superfamily. Classic translation factor GTPase family. IF-2 subfamily.

The protein localises to the cytoplasm. In terms of biological role, one of the essential components for the initiation of protein synthesis. Protects formylmethionyl-tRNA from spontaneous hydrolysis and promotes its binding to the 30S ribosomal subunits. Also involved in the hydrolysis of GTP during the formation of the 70S ribosomal complex. This is Translation initiation factor IF-2 from Synechococcus sp. (strain RCC307).